The following is a 514-amino-acid chain: Cytidine and dCMP deaminase domain-containing protein 1 (514 aa).

Composition is skewed to polar residues over residues 1-11 (MKEAGQMQNLE) and 18-27 (SVSTQTGSMT). 2 disordered regions span residues 1–27 (MKEA…GSMT) and 55–83 (RQKS…TDKR). Basic and acidic residues predominate over residues 59-83 (QKNEEGKHGPLGDNEERTRVSTDKR). The region spanning 70–168 (GDNEERTRVS…SLLTEASSSE (99 aa)) is the CMP/dCMP-type deaminase 1 domain. Positions 109, 134, and 137 each coordinate Zn(2+). A Nuclear export signal motif is present at residues 271–283 (NLRQNMKDLILLL). Residues 317–482 (EIARHCMVQA…LNPSGAYGLE (166 aa)) enclose the CMP/dCMP-type deaminase 2 domain. Histidine 398 is a binding site for Zn(2+). The Proton donor role is filled by glutamate 400. Cysteine 426 and cysteine 429 together coordinate Zn(2+). A disordered region spans residues 480-514 (GLEQNEPERRENGVLRPVPQKEEQHQDKKLRLGIH). The span at 485 to 514 (EPERRENGVLRPVPQKEEQHQDKKLRLGIH) shows a compositional bias: basic and acidic residues. A Bipartite nuclear localization signal motif is present at residues 488–510 (RRENGVLRPVPQKEEQHQDKKLR).

It belongs to the cytidine and deoxycytidylate deaminase family. Requires Zn(2+) as cofactor. Widely expressed. Expressed at high levels in the testis.

It is found in the cytoplasm. Its subcellular location is the nucleus. The enzyme catalyses 2'-deoxycytidine + H2O + H(+) = 2'-deoxyuridine + NH4(+). It carries out the reaction cytidine + H2O + H(+) = uridine + NH4(+). Functionally, catalyzes the deamination of cytidine and deoxycytidine into uridine and deoxyuridine, respectively. May play an important role in testicular development and spermatogenesis. This Homo sapiens (Human) protein is Cytidine and dCMP deaminase domain-containing protein 1 (CDADC1).